The primary structure comprises 373 residues: Transcription factor bHLH87 (373 aa).

Residues 127–227 (SAESENREIT…GGSSNISFQH (101 aa)) form a disordered region. Positions 188-218 (PQDDSEKGGFKLIYDENQSKSKKPRTEKERG) are enriched in basic and acidic residues. The bHLH domain occupies 275–324 (ISTDPQTVAARQRRERISEKIRVLQTLVPGGTKMDTASMLDEAANYLKFL).

As to quaternary structure, homodimer. In terms of tissue distribution, flowers.

The protein resides in the nucleus. This Arabidopsis thaliana (Mouse-ear cress) protein is Transcription factor bHLH87 (BHLH87).